The following is a 72-amino-acid chain: Translation initiation factor IF-1 (72 aa).

Residues 1 to 72 (MAKDDVIQMQ…SRARIVFRTK (72 aa)) enclose the S1-like domain.

This sequence belongs to the IF-1 family. In terms of assembly, component of the 30S ribosomal translation pre-initiation complex which assembles on the 30S ribosome in the order IF-2 and IF-3, IF-1 and N-formylmethionyl-tRNA(fMet); mRNA recruitment can occur at any time during PIC assembly.

Its subcellular location is the cytoplasm. Its function is as follows. One of the essential components for the initiation of protein synthesis. Stabilizes the binding of IF-2 and IF-3 on the 30S subunit to which N-formylmethionyl-tRNA(fMet) subsequently binds. Helps modulate mRNA selection, yielding the 30S pre-initiation complex (PIC). Upon addition of the 50S ribosomal subunit IF-1, IF-2 and IF-3 are released leaving the mature 70S translation initiation complex. The polypeptide is Translation initiation factor IF-1 (Herminiimonas arsenicoxydans).